The sequence spans 2063 residues: Nuclear receptor coactivator 6 (2063 aa).

Residues 1–928 (MVLDDLPNLE…PPRKKKNSQQ (928 aa)) form a TBP/GTF2A-binding region region. The tract at residues 1 to 1057 (MVLDDLPNLE…LPVSQNVHPP (1057 aa)) is CREBBP-binding region. Residues 1–1310 (MVLDDLPNLE…QTHKLDSVVV (1310 aa)) are NCOA1-binding region. Position 95 is an asymmetric dimethylarginine (R95). Disordered stretches follow at residues 184–251 (IPPG…VNRQ), 281–549 (QQQQ…APQL), and 789–811 (RPPG…ANND). A compositionally biased stretch (low complexity) spans 281 to 300 (QQQQQLQARPPQQHQQQQPQ). Composition is skewed to polar residues over residues 353–368 (MQQQ…TVQT), 379–406 (GSQQ…QMKS), 417–453 (PLQQ…QQQM), 462–502 (PLPQ…QGPQ), and 522–549 (GQAN…APQL). The segment at 773-927 (VNNSPSQVMG…KPPRKKKNSQ (155 aa)) is NCOA6IP-binding region. S884 is subject to Phosphoserine; by MAPK; in vitro. The LXXLL motif 1 signature appears at 887–891 (LVNLL). Disordered stretches follow at residues 899–1278 (HFGV…LNPT), 1310–1353 (VNSG…KAPK), and 1448–1474 (EVKM…PSVE). Over residues 903–912 (NNKQNNTNAN) the composition is skewed to low complexity. The span at 913-925 (KPKKKKPPRKKKN) shows a compositional bias: basic residues. A compositionally biased stretch (low complexity) spans 982–992 (PLQQMPPQLMQ). Positions 995 to 1020 (APPPQPPQQQPQPQLPQQQQPPPPSQ) are enriched in pro residues. Residues 1021-1041 (PQSQQQQQQQQQMMMMLMMQQ) are compositionally biased toward low complexity. 2 positions are modified to asymmetric dimethylarginine: R1047 and R1058. A compositionally biased stretch (polar residues) spans 1063 to 1075 (PDSQRMPMQQSGS). R1096 carries the post-translational modification Asymmetric dimethylarginine. Polar residues-rich tracts occupy residues 1104-1125 (PLGS…SSSP), 1173-1191 (LSAT…SLPS), and 1202-1214 (APTQ…TPNR). The span at 1219 to 1232 (PYYPQTPNNRPPST) shows a compositional bias: pro residues. A compositionally biased stretch (polar residues) spans 1310–1320 (VNSGKQSNSGA). The segment covering 1322–1345 (KRASPSNSRRSSPGSSRKTTPSPG) has biased composition (low complexity). The LXXLL motif 2 signature appears at 1491-1495 (LSQLL). The interval 1641 to 2063 (SEGQSAAQSN…AVQSKRRKSK (423 aa)) is EP300/CRSP3-binding region. Positions 1738–1820 (ATPVQLPSPP…VSSSKGKGKV (83 aa)) are disordered. The segment covering 1750–1763 (SSPVVPSHPPVQQV) has biased composition (low complexity). Residues 1773–1798 (PQVNTSADQNTLPSSQSTTMVSPLLT) are compositionally biased toward polar residues. A compositionally biased stretch (low complexity) spans 1799–1815 (NSPGSSGNRRSPVSSSK). N6-acetyllysine occurs at positions 1819 and 1822. Disordered stretches follow at residues 1837–1908 (GSLE…LPGG) and 1995–2063 (IVSG…RKSK). Residues 2002 to 2011 (EPKEIVEKSK) show a composition bias toward basic and acidic residues. The residue at position 2018 (S2018) is a Phosphoserine.

As to quaternary structure, monomer and homodimer. Interacts with RBM39. Interacts in vitro with the basal transcription factors GTF2A and TBP, suggesting an autonomous transactivation function. Interacts with NCOA1, CRSP3, RBM14, the histone acetyltransferases EP300 and CREBBP, and with the methyltransferases NCOA6IP and PRMT2/HRMT1L1. Component of the MLL2/3 complex (also named ASCOM complex), at least composed of KMT2D/MLL2 or KMT2C/MLL3, ASH2L, RBBP5, WDR5, NCOA6, DPY30, KDM6A, PAXIP1/PTIP, PAGR1 and alpha- and beta-tubulin. Interacts with ZNF335; may enhance ligand-dependent transcriptional activation by nuclear hormone receptors. Post-translationally, phosphorylated by PRKDC. Phosphorylation on Ser-884 leads to a strong decrease in binding to ESR1 and ESR2. Ubiquitous. Highly expressed in brain, prostate, testis and ovary; weakly expressed in lung, thymus and small intestine.

It localises to the nucleus. Nuclear receptor coactivator that directly binds nuclear receptors and stimulates the transcriptional activities in a hormone-dependent fashion. Coactivates expression in an agonist- and AF2-dependent manner. Involved in the coactivation of different nuclear receptors, such as for steroids (GR and ERs), retinoids (RARs and RXRs), thyroid hormone (TRs), vitamin D3 (VDR) and prostanoids (PPARs). Probably functions as a general coactivator, rather than just a nuclear receptor coactivator. May also be involved in the coactivation of the NF-kappa-B pathway. May coactivate expression via a remodeling of chromatin and its interaction with histone acetyltransferase proteins. The chain is Nuclear receptor coactivator 6 (NCOA6) from Homo sapiens (Human).